The chain runs to 687 residues: Probable ATP-dependent RNA helicase Dbp73D (687 aa).

Disordered stretches follow at residues 1–26 and 52–87; these read MELF…TNNE and TPIL…EEDV. Composition is skewed to basic and acidic residues over residues 9–18 and 54–79; these read YTEDLKEQKD and ILEK…EKPL. The Q motif motif lies at 160–168; the sequence is LFPVQKQVI. In terms of domain architecture, Helicase ATP-binding spans 177–381; it reads KPPPFRPRDI…DLRLFQPRLF (205 aa). 190–197 contacts ATP; it reads APTGSGKT. The short motif at 305–308 is the DEAD box element; it reads DEAD. Residues 434-583 enclose the Helicase C-terminal domain; sequence TVFALVEKYK…EIHVSPDIEI (150 aa). Residues 646-675 are disordered; sequence IVQSSKKSSETKNSKTKADKTKYQPKETKK. Basic and acidic residues predominate over residues 652–675; sequence KSSETKNSKTKADKTKYQPKETKK.

This sequence belongs to the DEAD box helicase family. DDX51/DBP6 subfamily. Expressed in the germline tissue of the ovary.

Its subcellular location is the nucleus. It is found in the nucleolus. The enzyme catalyses ATP + H2O = ADP + phosphate + H(+). ATP-binding RNA helicase involved in the biogenesis of 60S ribosomal subunits. The sequence is that of Probable ATP-dependent RNA helicase Dbp73D (Dbp73D) from Drosophila melanogaster (Fruit fly).